Reading from the N-terminus, the 271-residue chain is Putative phosphoenolpyruvate synthase regulatory protein (271 aa).

152–159 serves as a coordination point for ADP; that stretch reads GVSRCGKT.

The protein belongs to the pyruvate, phosphate/water dikinase regulatory protein family. PSRP subfamily.

The enzyme catalyses [pyruvate, water dikinase] + ADP = [pyruvate, water dikinase]-phosphate + AMP + H(+). It carries out the reaction [pyruvate, water dikinase]-phosphate + phosphate + H(+) = [pyruvate, water dikinase] + diphosphate. In terms of biological role, bifunctional serine/threonine kinase and phosphorylase involved in the regulation of the phosphoenolpyruvate synthase (PEPS) by catalyzing its phosphorylation/dephosphorylation. In Legionella pneumophila (strain Lens), this protein is Putative phosphoenolpyruvate synthase regulatory protein.